Consider the following 398-residue polypeptide: Pentalenolactone synthase (398 aa).

Cys347 serves as a coordination point for heme.

Belongs to the cytochrome P450 family. Heme serves as cofactor.

It carries out the reaction pentalenolactone F + 2 reduced [2Fe-2S]-[ferredoxin] + O2 + 2 H(+) = pentalenolactone + 2 oxidized [2Fe-2S]-[ferredoxin] + 2 H2O. Its pathway is antibiotic biosynthesis; pentalenolactone biosynthesis. In terms of biological role, catalyzes the final step in the biosynthesis of the sesquiterpenoid antibiotic pentalenolactone by mediating the oxidative rearrangement of pentalenolactone F to pentalenolactone. The chain is Pentalenolactone synthase (penM) from Streptomyces exfoliatus (Streptomyces hydrogenans).